An 87-amino-acid chain; its full sequence is UPF0250 protein Spro_1197 (87 aa).

It belongs to the UPF0250 family.

The chain is UPF0250 protein Spro_1197 from Serratia proteamaculans (strain 568).